The following is an 804-amino-acid chain: MVGGGRTGIHLLLGFLIGAALALFFFSSTPSIDLTSSLAAFTSCQNQETETNVLEPSALEKGRVYKDLSEHWIVHQDDMPAPPHNQDATPKVTRTRFAATELGTRERVMAAVMAESALALSINATLGRHVPRVHLFADSSRIDNDLAQLTNLSPYKLNGQKTHSMVLGLLFNMTVHNNYDWFLLAKDSTYINPFVLLRMIDTMNWNEPVVMGEAAEDGSGRCRLDTGMLLSQPAMHALMNNRNACNNFALAADDDQLAFEKCIQIATNLTCKPLHQGVRYEVWRGAERADSPAAHDSIEDWKHSPAFKRALAVPRLLSDADASALHDYFVRVEMQRADREIIKMEAELSRLAEQEARETGEAISWPPALPPYAKPPNRYQVSTWEYFTMTELFRSEPNQNVRRLEGKDFDDVAEVVVAARQQVESEEPELEFVQLRNGYRVFDPRRGMDYMVDLTYRKTVNEMPEVDNRFESDNEAAHEESLKEIVVERRVHVSRMIASTQLMNQAPYVKEDTDVTVVIPVASEKDVLPARKLLARQARLCLFPTEEARKTRMVVAVFPLIESRSVTAITNDMEELKRRCKRSLLETDVLPVHPAVSTEGKGTAAAAALDDAVDRYGANTIYLLLSPHADVQKEFFDRARINTIKHYQVFFPVPFVEYHPTISGMEMTEKEEKETPTEQAREAALSRLRDGVEPKRKRTLIVQKEHGRFDSQDFSCFAVYGVDYVTARAKFGQNERRNDLISAFLGQDSIHVLRAVEPTLRIRYHKRSCDMESIDTEDIARCLDSKKENVAAKDQLAKLLFHEK.

Residues 1-6 (MVGGGR) lie on the Cytoplasmic side of the membrane. Residues 7–27 (TGIHLLLGFLIGAALALFFFS) form a helical; Signal-anchor for type II membrane protein membrane-spanning segment. The Lumenal portion of the chain corresponds to 28–804 (STPSIDLTSS…QLAKLLFHEK (777 aa)). Residues asparagine 123, asparagine 172, and asparagine 268 are each glycosylated (N-linked (GlcNAc...) asparagine).

This sequence belongs to the chondroitin N-acetylgalactosaminyltransferase family. As to quaternary structure, interacts with sqv-5. It depends on a divalent metal cation as a cofactor. As to expression, expressed in seam cells, the vulval epithelium and in oocytes (at protein level).

It is found in the golgi apparatus. It localises to the golgi stack membrane. The enzyme catalyses 3-O-(beta-D-GlcA-(1-&gt;3)-beta-D-GalNAc-(1-&gt;4)-beta-D-GlcA-(1-&gt;3)-beta-D-Gal-(1-&gt;3)-beta-D-Gal-(1-&gt;4)-beta-D-Xyl)-L-seryl-[protein] + UDP-N-acetyl-alpha-D-galactosamine = 3-O-(beta-D-GalNAc-(1-&gt;4)-beta-D-GlcA-(1-&gt;3)-beta-D-GalNAc-(1-&gt;4)-beta-D-GlcA-(1-&gt;3)-beta-D-Gal-(1-&gt;3)-beta-D-Gal-(1-&gt;4)-beta-D-Xyl)-L-seryl-[protein] + UDP + H(+). It carries out the reaction 3-O-{beta-D-GlcA-(1-&gt;3)-[beta-D-GalNAc-(1-&gt;4)-beta-D-GlcA-(1-&gt;3)](n)-beta-D-GalNAc-(1-&gt;4)-beta-D-GlcA-(1-&gt;3)-beta-D-Gal-(1-&gt;3)-beta-D-Gal-(1-&gt;4)-beta-D-Xyl}-L-seryl-[protein] + UDP-N-acetyl-alpha-D-galactosamine = 3-O-{[beta-D-GalNAc-(1-&gt;4)-beta-D-GlcA-(1-&gt;3)](n+1)-beta-D-GalNAc-(1-&gt;4)-beta-D-GlcA-(1-&gt;3)-beta-D-Gal-(1-&gt;3)-beta-D-Gal-(1-&gt;4)-beta-D-Xyl}-L-seryl-[protein] + UDP + H(+). It catalyses the reaction 3-O-(beta-D-GalNAc-(1-&gt;4)-beta-D-GlcA-(1-&gt;3)-beta-D-Gal-(1-&gt;3)-beta-D-Gal-(1-&gt;4)-beta-D-Xyl)-L-seryl-[protein] + UDP-alpha-D-glucuronate = 3-O-(beta-D-GlcA-(1-&gt;3)-beta-D-GalNAc-(1-&gt;4)-beta-D-GlcA-(1-&gt;3)-beta-D-Gal-(1-&gt;3)-beta-D-Gal-(1-&gt;4)-beta-D-Xyl)-L-seryl-[protein] + UDP + H(+). The catalysed reaction is 3-O-{[beta-D-GalNAc-(1-&gt;4)-beta-D-GlcA-(1-&gt;3)](n)-beta-D-GalNAc-(1-&gt;4)-beta-D-GlcA-(1-&gt;3)-beta-D-Gal-(1-&gt;3)-beta-D-Gal-(1-&gt;4)-beta-D-Xyl}-L-seryl-[protein] + UDP-alpha-D-glucuronate = 3-O-{beta-D-GlcA-(1-&gt;3)-[beta-D-GalNAc-(1-&gt;4)-beta-D-GlcA-(1-&gt;3)](n)-beta-D-GalNAc-(1-&gt;4)-beta-D-GlcA-(1-&gt;3)-beta-D-Gal-(1-&gt;3)-beta-D-Gal-(1-&gt;4)-beta-D-Xyl}-L-seryl-[protein] + UDP + H(+). In terms of biological role, has both beta-1,3-glucuronic acid and beta-1,4-N-acetylgalactosamine transferase activity. Transfers glucuronic acid (GlcUA) from UDP-GlcUA and N-acetylgalactosamine (GalNAc) from UDP-GalNAc to the non-reducing end of the elongating chondroitin polymer. Required together with sqv-5 for the biosynthesis of chondroitin. Chondroitin is involved in organogenesis of the vulva, maturation of the gonad, and neural development. May have a specific role in unc-6/netrin-mediated dorsal guidance of gonadal distal tip cells. Glycosyltransferase activity is weak. The protein is Chondroitin sulfate synthase mig-22 (mig-22) of Caenorhabditis elegans.